Reading from the N-terminus, the 140-residue chain is Large ribosomal subunit protein uL11 (140 aa).

The protein belongs to the universal ribosomal protein uL11 family. In terms of assembly, part of the ribosomal stalk of the 50S ribosomal subunit. Interacts with L10 and the large rRNA to form the base of the stalk. L10 forms an elongated spine to which L12 dimers bind in a sequential fashion forming a multimeric L10(L12)X complex. In terms of processing, one or more lysine residues are methylated.

Forms part of the ribosomal stalk which helps the ribosome interact with GTP-bound translation factors. The protein is Large ribosomal subunit protein uL11 of Heliobacterium modesticaldum (strain ATCC 51547 / Ice1).